The primary structure comprises 393 residues: Protein TsgA (393 aa).

The next 12 membrane-spanning stretches (helical) occupy residues 11 to 31, 51 to 71, 78 to 98, 101 to 121, 134 to 154, 162 to 182, 206 to 226, 245 to 265, 273 to 293, 298 to 318, 332 to 352, and 361 to 381; these read WISF…GMVM, FLNA…EIIP, FGFI…SLAL, AAMF…TFLI, LLFT…VAAF, WYWV…LTFG, IGVL…LGFI, ALVS…SFIL, ILTV…TGTQ, WFIL…ITLG, FILT…GPIV, and LLTA…LGFV.

This sequence belongs to the major facilitator superfamily. TsgA family.

Its subcellular location is the cell inner membrane. The protein is Protein TsgA of Salmonella paratyphi B (strain ATCC BAA-1250 / SPB7).